A 1234-amino-acid chain; its full sequence is Chromosome-associated kinesin KIF4B (1234 aa).

The 328-residue stretch at 9–336 (PVRVALRCRP…LRYADRARKI (328 aa)) folds into the Kinesin motor domain. Residue 88 to 95 (GQTGSGKT) coordinates ATP. Residues 350–999 (ELNHLKQQVQ…IKQKLILLQV (650 aa)) adopt a coiled-coil conformation. Phosphoserine is present on serine 394. 2 disordered regions span residues 494-513 (EEAQVETSPETSRSSDAFTT) and 712-737 (KRLKDALQKQREVTDKRKETQSHGKE). Polar residues predominate over residues 498 to 513 (VETSPETSRSSDAFTT). Residues 663–1234 (QWKQKKDKEV…GCSPIEEEAH (572 aa)) are interaction with PRC1. Basic and acidic residues predominate over residues 713–737 (RLKDALQKQREVTDKRKETQSHGKE). Positions 793–798 (PKLRKC) match the Nuclear localization signal motif. Phosphothreonine is present on threonine 799. A phosphoserine mark is found at serine 801, serine 951, serine 1001, serine 1013, serine 1017, and serine 1028. A globular region spans residues 1000–1234 (ASRQKHLPND…GCSPIEEEAH (235 aa)). Disordered regions lie at residues 1007 to 1030 (PNDTLLSPDSSFEYIPPKPKPSRV), 1052 to 1076 (VNEHEDGDGDGDSDEGDDEEWKPTK), 1122 to 1143 (RQQGKDSLGTVEQTQDSEGSFK), and 1183 to 1234 (TAPA…EEAH). The span at 1056-1071 (EDGDGDGDSDEGDDEE) shows a compositional bias: acidic residues. The segment at 1086 to 1144 (QGCSCKGWCGNKQCGCRKQKSDCGVDCSCDPTKCRNRQQGKDSLGTVEQTQDSEGSFKL) is CRD; required for [4Fe-4S] cluster binding and localization to the spindle midzone and midbody during anaphase and telophase. Position 1128 is a phosphoserine (serine 1128). Position 1183 is a phosphothreonine (threonine 1183). Serine 1188 carries the phosphoserine modification. Lysine 1196 participates in a covalent cross-link: Glycyl lysine isopeptide (Lys-Gly) (interchain with G-Cter in SUMO2). Serine 1227 is modified (phosphoserine).

The protein belongs to the TRAFAC class myosin-kinesin ATPase superfamily. Kinesin family. Chromokinesin subfamily. The cofactor is [2Fe-2S] cluster. Requires [4Fe-4S] cluster as cofactor. As to expression, specifically expressed in testis.

The protein resides in the nucleus matrix. The protein localises to the cytoplasm. It localises to the cytoskeleton. In terms of biological role, iron-sulfur (Fe-S) cluster binding motor protein that has a role in chromosome segregation during mitosis. Translocates PRC1 to the plus ends of interdigitating spindle microtubules during the metaphase to anaphase transition, an essential step for the formation of an organized central spindle midzone and midbody and for successful cytokinesis. May play a role in mitotic chromosomal positioning and bipolar spindle stabilization. The chain is Chromosome-associated kinesin KIF4B (KIF4B) from Homo sapiens (Human).